The chain runs to 82 residues: MDLSSKTVVQVVMLALIAQVTFSQHWSYGWLPGGKRSVGELEATIRMMDTGGVMALPEETGAHIPERLRPYDVMSKKRMPHK.

A signal peptide spans 1–23; it reads MDLSSKTVVQVVMLALIAQVTFS. Gln-24 carries the post-translational modification Pyrrolidone carboxylic acid. Gly-33 is subject to Glycine amide.

It belongs to the GnRH family.

The protein resides in the secreted. Functionally, stimulates the secretion of gonadotropins. The protein is Progonadoliberin-3 (gnrh3) of Oncorhynchus masou (Cherry salmon).